The sequence spans 200 residues: MTITTLTLGMILAAYLAGSISSAVLVCRLRGLPDPRTAGSGNPGATNVLRIGGASSAAMVLFFDMLKGALPAYIAFRLGIDQVALGAIAIAACLGHIFPIFFKFKGGKGVATAFGAMAPIGHELALALMVTWIVMVLISRYSSLAAITTAMLAPIYTWFLDERFTIPVAMLSTLIVIRHRDNIHRLLKGEESKVSRKKKG.

The next 5 membrane-spanning stretches (helical) occupy residues 6–26, 56–76, 82–102, 118–138, and 141–161; these read LTLG…AVLV, SAAM…YIAF, QVAL…PIFF, APIG…MVLI, and YSSL…WFLD.

This sequence belongs to the PlsY family. As to quaternary structure, probably interacts with PlsX.

Its subcellular location is the cell inner membrane. The enzyme catalyses an acyl phosphate + sn-glycerol 3-phosphate = a 1-acyl-sn-glycero-3-phosphate + phosphate. The protein operates within lipid metabolism; phospholipid metabolism. Catalyzes the transfer of an acyl group from acyl-phosphate (acyl-PO(4)) to glycerol-3-phosphate (G3P) to form lysophosphatidic acid (LPA). This enzyme utilizes acyl-phosphate as fatty acyl donor, but not acyl-CoA or acyl-ACP. The sequence is that of Glycerol-3-phosphate acyltransferase from Shewanella sediminis (strain HAW-EB3).